Consider the following 371-residue polypeptide: MSFNTFGHLFRVTTFGESHGPAIGCVVDGCPPGLRFTVDEVQAALDRRRPGQSRFTTQRREPDQVRVISGTMDHPEGGLVTTGTPIGLLIENVDQRSKDYADIAGSYRPGHADVTYDLKYGLRDHRGGGRSSARETAMRVAAGAIAAKVLPGVTVRAALTRIGEIEIDRARWDWAQVSENPFFCPDPETVPVWTDYLDGIRKRGSSVGAVIEVVAEGVPAGLGAPIYGKLDADLAAAFMSINAVKGVEIGEGFNAARLTGEENADEMRTGNDGRPYFLSNHAGGILGGISSGEPVVARFAVKPTSSILTPRRTVDKFGTEEDLITKGRHDPCVGIRAVPVGEAMMLCVLADHLLRHRGQVGTTPVWPFQRG.

Residues R48 and R54 each contribute to the NADP(+) site. Residues R130–S132, N242–A243, G287, K302–S306, and R328 contribute to the FMN site.

Belongs to the chorismate synthase family. Homotetramer. FMNH2 is required as a cofactor.

The catalysed reaction is 5-O-(1-carboxyvinyl)-3-phosphoshikimate = chorismate + phosphate. It functions in the pathway metabolic intermediate biosynthesis; chorismate biosynthesis; chorismate from D-erythrose 4-phosphate and phosphoenolpyruvate: step 7/7. Functionally, catalyzes the anti-1,4-elimination of the C-3 phosphate and the C-6 proR hydrogen from 5-enolpyruvylshikimate-3-phosphate (EPSP) to yield chorismate, which is the branch point compound that serves as the starting substrate for the three terminal pathways of aromatic amino acid biosynthesis. This reaction introduces a second double bond into the aromatic ring system. The polypeptide is Chorismate synthase (Azorhizobium caulinodans (strain ATCC 43989 / DSM 5975 / JCM 20966 / LMG 6465 / NBRC 14845 / NCIMB 13405 / ORS 571)).